Consider the following 710-residue polypeptide: Ferrioxamine receptor (710 aa).

An N-terminal signal peptide occupies residues 1–26; the sequence is MFSAFIIKRSAILCSLAMFIPLASIA. The TonB box signature appears at 28–35; sequence DTIEVTAK. Transmembrane regions (beta stranded) follow at residues 29–37, 65–73, 91–99, 106–114, 137–145, 152–160, 180–188, 194–202, 208–216, 259–267, 271–279, 293–301, 309–317, 353–361, 370–378, 427–435, 443–451, 476–484, 491–499, 517–525, 531–539, 555–563, 567–575, 579–587, 610–618, 624–632, 649–657, 671–679, 684–692, and 702–710; these read TIEVTAKAG, TAQSVSVVT, YTPGVFTGF, YDTVALRGF, NVLQVDPWF, IKGPSSALY, SEGHFRLTA, QVAAFDYTD, WAFRLTGIT, GGYHSAVPA, IYGQKLSRG, WQQIYSYEF, WSFRQNASY, FAVDNQLEA, HKVLLGVDF, YEQSGVYLQ, WHLNLSGRY, GRASLLYSF, YVSYSQAIT, EQYEVGIIY, TSLYSAALY, YYVPAGKVN, LELEARSQI, LSVIAGYTY, NMASLWAQY, INVGAGIRY, YTLGDASVR, FVQLNVNNI, YVAACYSTS, and VQATVGYDF. The TBDR plug domain maps to 61 to 174; that stretch reads PLILTAQSVS…PGGVVMMTSK (114 aa). A TBDR beta-barrel domain is found at 181 to 710; the sequence is EGHFRLTAGN…SVQATVGYDF (530 aa). The TonB C-terminal box motif lies at 693-710; it reads YCYWGAERSVQATVGYDF.

This sequence belongs to the TonB-dependent receptor family.

It is found in the cell outer membrane. Functionally, ferrioxamine binding and uptake, in association with the TonB protein. The polypeptide is Ferrioxamine receptor (foxA) (Yersinia enterocolitica).